Consider the following 292-residue polypeptide: Probable endonuclease lcl3 (292 aa).

A disordered region spans residues 1-27; it reads MRWPPWSSESTNDEQKQTPSSWLSSAA. Polar residues predominate over residues 17–27; sequence QTPSSWLSSAA. Residues 45-61 traverse the membrane as a helical segment; it reads IIPTVVLTSGILIAVRF. In terms of domain architecture, TNase-like spans 83–250; sequence RSIFGQVTSV…KKRARGLWKD (168 aa). Arg-134 is an active-site residue. Asp-139 is a Ca(2+) binding site. Active-site residues include Glu-142 and Arg-182. The interval 257-292 is disordered; that stretch reads GWESPREYKNRMGMGDPLPIEKGNGKGNGKGKIGQK. Gly residues predominate over residues 281–292; the sequence is GKGNGKGKIGQK.

This sequence belongs to the LCL3 family.

The protein resides in the mitochondrion. It localises to the membrane. This Penicillium rubens (strain ATCC 28089 / DSM 1075 / NRRL 1951 / Wisconsin 54-1255) (Penicillium chrysogenum) protein is Probable endonuclease lcl3 (lcl3).